A 753-amino-acid chain; its full sequence is Photosystem I P700 chlorophyll a apoprotein A1 (753 aa).

8 consecutive transmembrane segments (helical) span residues 73–96 (IFSA…FHAA), 159–182 (LYSA…YHYH), 198–222 (MTHH…HVSL), 294–312 (IAHH…GHMY), 349–372 (WHAQ…HHMY), 388–414 (LNLF…IFMV), 436–458 (TIIS…LYIH), and 534–552 (FMIH…LILI). The [4Fe-4S] cluster site is built by Cys576 and Cys585. Transmembrane regions (helical) follow at residues 592 to 613 (HIFL…HFFW) and 667 to 689 (LSAY…MFLF). Position 678 (His678) interacts with chlorophyll a'. The chlorophyll a site is built by Met686 and Tyr694. Residue Trp695 participates in phylloquinone binding. The helical transmembrane segment at 727-747 (AVGLGHYLLGGIVTSWSFYLA) threads the bilayer.

It belongs to the PsaA/PsaB family. In terms of assembly, the PsaA/B heterodimer binds the P700 chlorophyll special pair and subsequent electron acceptors. PSI consists of a core antenna complex that captures photons, and an electron transfer chain that converts photonic excitation into a charge separation. The cyanobacterial PSI reaction center is composed of one copy each of PsaA,B,C,D,E,F,I,J,K,L,M and X, and forms trimeric complexes. PSI electron transfer chain: 5 chlorophyll a, 1 chlorophyll a', 2 phylloquinones and 3 4Fe-4S clusters. PSI core antenna: 90 chlorophyll a, 22 carotenoids, 3 phospholipids and 1 galactolipid. P700 is a chlorophyll a/chlorophyll a' dimer, A0 is one or more chlorophyll a, A1 is one or both phylloquinones and FX is a shared 4Fe-4S iron-sulfur center. is required as a cofactor.

The protein localises to the cellular thylakoid membrane. The enzyme catalyses reduced [plastocyanin] + hnu + oxidized [2Fe-2S]-[ferredoxin] = oxidized [plastocyanin] + reduced [2Fe-2S]-[ferredoxin]. PsaA and PsaB bind P700, the primary electron donor of photosystem I (PSI), as well as the electron acceptors A0, A1 and FX. PSI is a plastocyanin/cytochrome c6-ferredoxin oxidoreductase, converting photonic excitation into a charge separation, which transfers an electron from the donor P700 chlorophyll pair to the spectroscopically characterized acceptors A0, A1, FX, FA and FB in turn. Oxidized P700 is reduced on the lumenal side of the thylakoid membrane by plastocyanin or cytochrome c6. The chain is Photosystem I P700 chlorophyll a apoprotein A1 from Acaryochloris marina (strain MBIC 11017).